The chain runs to 227 residues: 2,3-bisphosphoglycerate-dependent phosphoglycerate mutase (227 aa).

Residues 7–14 (RHGQSEWN), 20–21 (TG), R59, 86–89 (ERHY), K97, 113–114 (RR), and 182–183 (GN) each bind substrate. H8 acts as the Tele-phosphohistidine intermediate in catalysis. The active-site Proton donor/acceptor is E86.

Belongs to the phosphoglycerate mutase family. BPG-dependent PGAM subfamily. As to quaternary structure, homodimer.

The enzyme catalyses (2R)-2-phosphoglycerate = (2R)-3-phosphoglycerate. It participates in carbohydrate degradation; glycolysis; pyruvate from D-glyceraldehyde 3-phosphate: step 3/5. Its function is as follows. Catalyzes the interconversion of 2-phosphoglycerate and 3-phosphoglycerate. This is 2,3-bisphosphoglycerate-dependent phosphoglycerate mutase from Neisseria meningitidis serogroup C / serotype 2a (strain ATCC 700532 / DSM 15464 / FAM18).